The chain runs to 905 residues: Alanine--tRNA ligase (905 aa).

His569, His573, Cys693, and His697 together coordinate Zn(2+).

It belongs to the class-II aminoacyl-tRNA synthetase family. The cofactor is Zn(2+).

Its subcellular location is the cytoplasm. The catalysed reaction is tRNA(Ala) + L-alanine + ATP = L-alanyl-tRNA(Ala) + AMP + diphosphate. Its function is as follows. Catalyzes the attachment of alanine to tRNA(Ala) in a two-step reaction: alanine is first activated by ATP to form Ala-AMP and then transferred to the acceptor end of tRNA(Ala). Also edits incorrectly charged Ser-tRNA(Ala) and Gly-tRNA(Ala) via its editing domain. This Roseiflexus sp. (strain RS-1) protein is Alanine--tRNA ligase.